We begin with the raw amino-acid sequence, 448 residues long: UDP-N-acetylmuramoylalanine--D-glutamate ligase (448 aa).

116–122 (GSNAKST) contributes to the ATP binding site.

Belongs to the MurCDEF family.

The protein localises to the cytoplasm. The enzyme catalyses UDP-N-acetyl-alpha-D-muramoyl-L-alanine + D-glutamate + ATP = UDP-N-acetyl-alpha-D-muramoyl-L-alanyl-D-glutamate + ADP + phosphate + H(+). Its pathway is cell wall biogenesis; peptidoglycan biosynthesis. Its function is as follows. Cell wall formation. Catalyzes the addition of glutamate to the nucleotide precursor UDP-N-acetylmuramoyl-L-alanine (UMA). The chain is UDP-N-acetylmuramoylalanine--D-glutamate ligase from Pseudomonas savastanoi pv. phaseolicola (strain 1448A / Race 6) (Pseudomonas syringae pv. phaseolicola (strain 1448A / Race 6)).